We begin with the raw amino-acid sequence, 210 residues long: Orotate phosphoribosyltransferase (210 aa).

5-phospho-alpha-D-ribose 1-diphosphate-binding positions include arginine 94, lysine 98, histidine 100, and 120–128 (EDLISTGGS). Serine 124 serves as a coordination point for orotate.

Belongs to the purine/pyrimidine phosphoribosyltransferase family. PyrE subfamily. Homodimer. It depends on Mg(2+) as a cofactor.

It carries out the reaction orotidine 5'-phosphate + diphosphate = orotate + 5-phospho-alpha-D-ribose 1-diphosphate. It participates in pyrimidine metabolism; UMP biosynthesis via de novo pathway; UMP from orotate: step 1/2. In terms of biological role, catalyzes the transfer of a ribosyl phosphate group from 5-phosphoribose 1-diphosphate to orotate, leading to the formation of orotidine monophosphate (OMP). This chain is Orotate phosphoribosyltransferase, found in Bacillus mycoides (strain KBAB4) (Bacillus weihenstephanensis).